Here is a 366-residue protein sequence, read N- to C-terminus: Chorismate synthase (366 aa).

Positions 48 and 54 each coordinate NADP(+). FMN contacts are provided by residues 125 to 127 (RSS), 238 to 239 (NA), G278, 293 to 297 (KPTSS), and R319.

It belongs to the chorismate synthase family. Homotetramer. It depends on FMNH2 as a cofactor.

It carries out the reaction 5-O-(1-carboxyvinyl)-3-phosphoshikimate = chorismate + phosphate. The protein operates within metabolic intermediate biosynthesis; chorismate biosynthesis; chorismate from D-erythrose 4-phosphate and phosphoenolpyruvate: step 7/7. Functionally, catalyzes the anti-1,4-elimination of the C-3 phosphate and the C-6 proR hydrogen from 5-enolpyruvylshikimate-3-phosphate (EPSP) to yield chorismate, which is the branch point compound that serves as the starting substrate for the three terminal pathways of aromatic amino acid biosynthesis. This reaction introduces a second double bond into the aromatic ring system. In Ralstonia nicotianae (strain ATCC BAA-1114 / GMI1000) (Ralstonia solanacearum), this protein is Chorismate synthase.